The chain runs to 226 residues: 7-cyano-7-deazaguanine synthase (226 aa).

ATP is bound at residue 7-17; sequence ISGGMDSLVVA. The Zn(2+) site is built by C187, C195, C198, and C201.

Belongs to the QueC family. The cofactor is Zn(2+).

It catalyses the reaction 7-carboxy-7-deazaguanine + NH4(+) + ATP = 7-cyano-7-deazaguanine + ADP + phosphate + H2O + H(+). Its pathway is purine metabolism; 7-cyano-7-deazaguanine biosynthesis. Catalyzes the ATP-dependent conversion of 7-carboxy-7-deazaguanine (CDG) to 7-cyano-7-deazaguanine (preQ(0)). The protein is 7-cyano-7-deazaguanine synthase of Chlorobium phaeobacteroides (strain BS1).